The primary structure comprises 156 residues: Ribosomal RNA large subunit methyltransferase H (156 aa).

Residues leucine 73, glycine 104, and 123-128 contribute to the S-adenosyl-L-methionine site; that span reads IGPLTL.

This sequence belongs to the RNA methyltransferase RlmH family. As to quaternary structure, homodimer.

It is found in the cytoplasm. It carries out the reaction pseudouridine(1915) in 23S rRNA + S-adenosyl-L-methionine = N(3)-methylpseudouridine(1915) in 23S rRNA + S-adenosyl-L-homocysteine + H(+). Specifically methylates the pseudouridine at position 1915 (m3Psi1915) in 23S rRNA. This Stenotrophomonas maltophilia (strain R551-3) protein is Ribosomal RNA large subunit methyltransferase H.